A 151-amino-acid chain; its full sequence is Ribosome maturation factor RimP (151 aa).

This sequence belongs to the RimP family.

The protein localises to the cytoplasm. Its function is as follows. Required for maturation of 30S ribosomal subunits. In Shewanella amazonensis (strain ATCC BAA-1098 / SB2B), this protein is Ribosome maturation factor RimP.